Here is a 31-residue protein sequence, read N- to C-terminus: Photosystem II reaction center protein T (31 aa).

Residues 3 to 23 (ALVYVFLLTGTLMVIFFAIFF) form a helical membrane-spanning segment.

Belongs to the PsbT family. As to quaternary structure, PSII is composed of 1 copy each of membrane proteins PsbA, PsbB, PsbC, PsbD, PsbE, PsbF, PsbH, PsbI, PsbJ, PsbK, PsbL, PsbM, PsbT, PsbX, PsbY, PsbZ, Psb30/Ycf12, at least 3 peripheral proteins of the oxygen-evolving complex and a large number of cofactors. It forms dimeric complexes.

It is found in the plastid. The protein resides in the chloroplast thylakoid membrane. Found at the monomer-monomer interface of the photosystem II (PS II) dimer, plays a role in assembly and dimerization of PSII. PSII is a light-driven water plastoquinone oxidoreductase, using light energy to abstract electrons from H(2)O, generating a proton gradient subsequently used for ATP formation. The sequence is that of Photosystem II reaction center protein T from Pyropia yezoensis (Susabi-nori).